We begin with the raw amino-acid sequence, 815 residues long: Protein SMAX1-LIKE 3 (815 aa).

The Clp R domain maps to 8–171; that stretch reads VEQALTADAA…TKVEQAVSLE (164 aa). 2 repeat regions span residues 12-80 and 99-171; these read LTAD…LNRL and ISNA…VSLE. The interval 750–769 is disordered; sequence SRACSPPSNQKSDGSDQPED. The short motif at 778–782 is the EAR element; that stretch reads LDLNL.

It belongs to the ClpA/ClpB family. Interacts probably with TPL/TPR in an EAR-motif dependent manner. As to expression, expressed in roots and seedlings.

In terms of biological role, may function in a transcriptional corepressor complex. The chain is Protein SMAX1-LIKE 3 from Arabidopsis thaliana (Mouse-ear cress).